Consider the following 444-residue polypeptide: uncharacterized protein (444 aa).

Residues 1-72 (MGFLTAAIRV…RPMWNVSFLR (72 aa)) constitute a chloroplast transit peptide. The disordered stretch occupies residues 77 to 107 (HSTPARETGDDDISKSENSSSQDGDSCTKLK). The span at 92 to 101 (SENSSSQDGD) shows a compositional bias: polar residues. One can recognise a CRM domain in the interval 175–272 (EILTPEEHFY…KNYVQPPTEI (98 aa)). The stretch at 292 to 355 (DALRAVRKYI…CLEDEQEEDE (64 aa)) forms a coiled coil. Disordered stretches follow at residues 344-364 (EECLEDEQEEDEAGLELATDS) and 392-426 (KFPAINNREDEDFGDLGKAKSEGEENDDDKSPNFD). Positions 346 to 357 (CLEDEQEEDEAG) are enriched in acidic residues. The span at 406–426 (DLGKAKSEGEENDDDKSPNFD) shows a compositional bias: basic and acidic residues.

It localises to the plastid. Its subcellular location is the chloroplast. This is an uncharacterized protein from Arabidopsis thaliana (Mouse-ear cress).